The following is a 223-amino-acid chain: 7-cyano-7-deazaguanine synthase (223 aa).

11 to 21 (ISGGMDSALAA) contacts ATP. Positions 189, 197, 200, and 203 each coordinate Zn(2+).

This sequence belongs to the QueC family. Zn(2+) is required as a cofactor.

It carries out the reaction 7-carboxy-7-deazaguanine + NH4(+) + ATP = 7-cyano-7-deazaguanine + ADP + phosphate + H2O + H(+). It participates in purine metabolism; 7-cyano-7-deazaguanine biosynthesis. In terms of biological role, catalyzes the ATP-dependent conversion of 7-carboxy-7-deazaguanine (CDG) to 7-cyano-7-deazaguanine (preQ(0)). This is 7-cyano-7-deazaguanine synthase from Campylobacter fetus subsp. fetus (strain 82-40).